Reading from the N-terminus, the 239-residue chain is uncharacterized protein (239 aa).

Positions 104–127 are disordered; it reads LPATSQSSQPKSTNSSTESSSIGQ. Residues 107 to 127 show a composition bias toward low complexity; sequence TSQSSQPKSTNSSTESSSIGQ. A coiled-coil region spans residues 134–202; it reads ENEINLNKNK…HFIQNNQESF (69 aa). Residues 211-231 traverse the membrane as a helical segment; the sequence is VKIGSAFIIYIFYNVLFFIIV.

It is found in the membrane. This is an uncharacterized protein from Dictyostelium discoideum (Social amoeba).